Reading from the N-terminus, the 554-residue chain is Malate synthase 2 (554 aa).

The active-site Proton acceptor is arginine 177. Aspartate 457 functions as the Proton donor in the catalytic mechanism. The SKL peroxisome targeting motif signature appears at 552 to 554 (SKL).

It belongs to the malate synthase family. In terms of assembly, interacts with PEX9.

The protein resides in the peroxisome matrix. It carries out the reaction glyoxylate + acetyl-CoA + H2O = (S)-malate + CoA + H(+). In terms of biological role, allantoin metabolism-specific malate synthase involved in the recycling the glyoxylate generated during allantoin degradation by the ureidoglycollate (UG) hydrolase reaction. This is Malate synthase 2 from Saccharomyces cerevisiae (strain ATCC 204508 / S288c) (Baker's yeast).